A 757-amino-acid polypeptide reads, in one-letter code: Inhibitor of nuclear factor kappa-B kinase subunit beta (757 aa).

In terms of domain architecture, Protein kinase spans 15 to 300; the sequence is WEMKERLGTG…DPQYGPNGCF (286 aa). ATP contacts are provided by residues 21–29 and Lys-44; that span reads LGTGGFGNV. The active-site Proton acceptor is the Asp-145. Lys-163 is covalently cross-linked (Glycyl lysine isopeptide (Lys-Gly) (interchain with G-Cter in ubiquitin)). At Ser-177 the chain carries Phosphoserine; by TBK1 and PKC/PRKCZ. Cys-179 is modified (S-nitrosocysteine). Ser-181 carries the phosphoserine; by TBK1, PKC/PRKCZ and PDPK1 modification. Pro-191 bears the Hydroxyproline mark. The leucine-zipper stretch occupies residues 458 to 479; the sequence is LLRNNSCLSKMKNAMASTAQQL. Ser-670 is modified (phosphoserine; by autocatalysis). Ser-672 is modified (phosphoserine). A phosphoserine; by autocatalysis mark is found at Ser-675, Ser-682, Ser-689, Ser-692, Ser-697, Ser-705, Ser-733, and Ser-740. A disordered region spans residues 683-703; the sequence is HPGQLMSQPSSACDSLPESDK. The interval 737 to 742 is NEMO-binding; that stretch reads LDWSWL.

It belongs to the protein kinase superfamily. Ser/Thr protein kinase family. I-kappa-B kinase subfamily. Component of the I-kappa-B-kinase (IKK) core complex consisting of CHUK, IKBKB and IKBKG; probably four alpha/CHUK-beta/IKBKB dimers are associated with four gamma/IKBKG subunits. The IKK core complex seems to associate with regulatory or adapter proteins to form a IKK-signalosome holo-complex. The IKK complex associates with TERF2IP/RAP1, leading to promote IKK-mediated phosphorylation of RELA/p65. Part of a complex composed of NCOA2, NCOA3, CHUK/IKKA, IKBKB, IKBKG and CREBBP. Part of a 70-90 kDa complex at least consisting of CHUK/IKKA, IKBKB, NFKBIA, RELA, ELP1 and MAP3K14. Found in a membrane raft complex, at least composed of BCL10, CARD11, DPP4 and IKBKB. Interacts with SQSTM1 through PRKCZ or PRKCI. Forms an NGF-induced complex with IKBKB, PRKCI and TRAF6. May interact with MAVS/IPS1. Interacts with NALP2. Interacts with TICAM1. Interacts with FAF1; the interaction disrupts the IKK complex formation. Interacts with ATM. Part of a ternary complex consisting of TANK, IKBKB and IKBKG. Interacts with NIBP; the interaction is direct. Interacts with ARRB1 and ARRB2. Interacts with TRIM21. Interacts with NLRC5; prevents IKBKB phosphorylation and kinase activity. Interacts with PDPK1. Interacts with EIF2AK2/PKR. The phosphorylated form interacts with PPM1A and PPM1B. Interacts with ZNF268 isoform 2; the interaction is further increased in a TNF-alpha-dependent manner. Interacts with IKBKE. Interacts with ZC3H12A. Interacts with AKAP13. Interacts with LRRC14; disrupts IKBKB-IKBKG interaction preventing I-kappa-B-kinase (IKK) core complex formation and leading to a decrease of IKBKB phosphorylation and NF-kappaB activation. Interacts with SASH1. Interacts with ARFIP2. Interacts with FKBP5. Interacts with kinase TBK1; the complex interacts with STAT1, leading to phosphorylation of STAT1 on 'Thr-748' by IKBKB. In terms of processing, upon cytokine stimulation, phosphorylated on Ser-177 and Ser-181 by MEKK1 and/or MAP3K14/NIK as well as TBK1 and PRKCZ; which enhances activity. Phosphorylated by MAP3K7/TAK1 in response to NOD1 and NOD2 signaling, promoting activation and phosphorylation of NF-kappa-B inhibitors, leading to NF-kappa-B activation. Once activated, autophosphorylates on the C-terminal serine cluster; which decreases activity and prevents prolonged activation of the inflammatory response. Phosphorylated by the IKK-related kinases TBK1 and IKBKE, which is associated with reduced CHUK/IKKA and IKBKB activity and NF-kappa-B-dependent gene transcription. Dephosphorylated at Ser-177 and Ser-181 by PPM1A and PPM1B. Post-translationally, ubiquitinated. Monoubiquitination involves TRIM21 that leads to inhibition of Tax-induced NF-kappa-B signaling. 'Ser-163' may not serve as a monoubiquitination site. Ubiquitination on 'Ser-163' may modulate phosphorylation on C-terminal serine residues. Hydroxylated by PHD1/EGLN2, loss of hydroxylation under hypoxic conditions results in activation of NF-kappa-B. As to expression, detected in heart (at protein level). Expressed in liver, kidney and spleen.

It localises to the cytoplasm. Its subcellular location is the nucleus. The protein resides in the membrane raft. The catalysed reaction is L-seryl-[I-kappa-B protein] + ATP = O-phospho-L-seryl-[I-kappa-B protein] + ADP + H(+). It catalyses the reaction L-seryl-[protein] + ATP = O-phospho-L-seryl-[protein] + ADP + H(+). The enzyme catalyses L-threonyl-[protein] + ATP = O-phospho-L-threonyl-[protein] + ADP + H(+). Serine kinase that plays an essential role in the NF-kappa-B signaling pathway which is activated by multiple stimuli such as inflammatory cytokines, bacterial or viral products, DNA damages or other cellular stresses. Acts as a part of the canonical IKK complex in the conventional pathway of NF-kappa-B activation. Phosphorylates inhibitors of NF-kappa-B on 2 critical serine residues. These modifications allow polyubiquitination of the inhibitors and subsequent degradation by the proteasome. In turn, free NF-kappa-B is translocated into the nucleus and activates the transcription of hundreds of genes involved in immune response, growth control, or protection against apoptosis. In addition to the NF-kappa-B inhibitors, phosphorylates several other components of the signaling pathway including NEMO/IKBKG, NF-kappa-B subunits RELA and NFKB1, as well as IKK-related kinases TBK1 and IKBKE. IKK-related kinase phosphorylations may prevent the overproduction of inflammatory mediators since they exert a negative regulation on canonical IKKs. Phosphorylates FOXO3, mediating the TNF-dependent inactivation of this pro-apoptotic transcription factor. Also phosphorylates other substrates including NAA10, NCOA3, BCL10 and IRS1. Phosphorylates RIPK1 at 'Ser-25' which represses its kinase activity and consequently prevents TNF-mediated RIPK1-dependent cell death. Phosphorylates the C-terminus of IRF5, stimulating IRF5 homodimerization and translocation into the nucleus. Following bacterial lipopolysaccharide (LPS)-induced TLR4 endocytosis, phosphorylates STAT1 at 'Thr-748' which restricts interferon signaling and anti-inflammatory responses and promotes innate inflammatory responses. IKBKB-mediated phosphorylation of STAT1 at 'Thr-748' promotes binding of STAT1 to the ARID5A promoter, resulting in transcriptional activation of ARID5A and subsequent ARID5A-mediated stabilization of IL6. It also promotes binding of STAT1 to the IL12B promoter and activation of IL12B transcription. This is Inhibitor of nuclear factor kappa-B kinase subunit beta (Ikbkb) from Mus musculus (Mouse).